A 328-amino-acid polypeptide reads, in one-letter code: Phosphate acyltransferase (328 aa).

The protein belongs to the PlsX family. As to quaternary structure, homodimer. Probably interacts with PlsY.

Its subcellular location is the cytoplasm. It catalyses the reaction a fatty acyl-[ACP] + phosphate = an acyl phosphate + holo-[ACP]. Its pathway is lipid metabolism; phospholipid metabolism. Its function is as follows. Catalyzes the reversible formation of acyl-phosphate (acyl-PO(4)) from acyl-[acyl-carrier-protein] (acyl-ACP). This enzyme utilizes acyl-ACP as fatty acyl donor, but not acyl-CoA. This Campylobacter jejuni (strain RM1221) protein is Phosphate acyltransferase.